Consider the following 476-residue polypeptide: MGMKIGNDPFHKRTATGIGDQFMRQAVRKAQDGLRVKKLKATESLGNWEEWRALGEEIRKHTLENLDYYLYELSENIEKNGGFVYFAKTAEDAREYVKEIVKKKNAKKIVKSKSMVTEEISLNEAIEEAGAEVLETDLAEFILQVNDHDPPSHIVVPCLHKDKEHICEIFKTKLNYTGTSDPTEMARFVRSYLRDDFFAADIGVTGCNFAVAESGSISIVANEGNARLTTTLPKTLITVMGMERIVPTWEELDVLVTLLCRSSVGQKLTSYITGLTEPGGTDGPEEFHLVIVDNGRSDIVGTEFQSVLQCIRCAACINVCPVYRHIGGHAYGSIYPGPIGAVLTPLLGGYDEYKDLPYASSLCGACTEACPVKIPLHDLLIKHRSRIVEEKQSPVAWNVAMKGFEKAVKSPRLFSFAAKSAPYALKPLAKGDKIERGIGPLKAWTDARDFPVPKKQPFREWFEKHVKENDDGHSKS.

2 4Fe-4S ferredoxin-type domains span residues 301–331 and 350–379; these read GTEFQSVLQCIRCAACINVCPVYRHIGGHAY and YDEYKDLPYASSLCGACTEACPVKIPLHDL. Positions 310, 313, 316, 320, 363, 366, and 370 each coordinate [4Fe-4S] cluster.

This sequence belongs to the LutB/YkgF family.

Is involved in L-lactate degradation and allows cells to grow with lactate as the sole carbon source. Has probably a role as an electron transporter during oxidation of L-lactate. This is Lactate utilization protein B 1 from Bacillus mycoides (strain KBAB4) (Bacillus weihenstephanensis).